Consider the following 342-residue polypeptide: Outer spore wall protein RRT8 (342 aa).

Residues 1–109 (MKAGIELISH…VLTNPVYWKH (109 aa)) are Cytoplasmic-facing. A helical membrane pass occupies residues 110 to 130 (ILLFAVCYALIFVTIAGLFYV). A topological domain (extracellular) is located at residue Thr131. A helical transmembrane segment spans residues 132 to 152 (LVPLLVTWAILLLGPLGVILV). Topologically, residues 153-240 (HIQWILQTNV…PRLLFRMFFK (88 aa)) are cytoplasmic. A helical membrane pass occupies residues 241–261 (VSNFTSLTLLSLIPIVGPILA). Topologically, residues 262–299 (NQLMAPKRTFTYLQRYFLLKGFSKKQAKDFQYEHYASF) are extracellular. Residues 300–320 (ICFGMSAGLLELIPFFTIVTI) form a helical membrane-spanning segment. Over 321–342 (SSNTVGAAKWCTSLLKGERKKE) the chain is Cytoplasmic.

It belongs to the LDS family.

It localises to the prospore membrane. Its subcellular location is the lipid droplet. The protein resides in the spore wall. Involved in spore wall assembly. May be involved in the modulation of rDNA transcription. This is Outer spore wall protein RRT8 from Saccharomyces cerevisiae (strain ATCC 204508 / S288c) (Baker's yeast).